The primary structure comprises 166 residues: 16S rRNA aminocarboxypropyltransferase (166 aa).

Thr17, Ile62, Leu84, Tyr99, and Ser103 together coordinate S-adenosyl-L-methionine.

Belongs to the TDD superfamily. TSR3 family.

The protein resides in the cytoplasm. It carries out the reaction an N(1)-methylpseudouridine in rRNA + S-adenosyl-L-methionine = N(1)-methyl-N(3)-[(3S)-3-amino-3-carboxypropyl]pseudouridine in rRNA + S-methyl-5'-thioadenosine + H(+). Aminocarboxypropyltransferase that catalyzes the aminocarboxypropyl transfer on pseudouridine corresponding to position 914 in M.jannaschii 16S rRNA. It constitutes the last step in biosynthesis of the hypermodified N1-methyl-N3-(3-amino-3-carboxypropyl) pseudouridine (m1acp3-Psi). The protein is 16S rRNA aminocarboxypropyltransferase of Saccharolobus islandicus (strain M.16.27) (Sulfolobus islandicus).